The primary structure comprises 166 residues: Small ribosomal subunit protein uS5 (166 aa).

Positions 11-74 (LQEKLVQVNR…DQARRNMVKV (64 aa)) constitute an S5 DRBM domain.

The protein belongs to the universal ribosomal protein uS5 family. In terms of assembly, part of the 30S ribosomal subunit. Contacts proteins S4 and S8.

In terms of biological role, with S4 and S12 plays an important role in translational accuracy. Its function is as follows. Located at the back of the 30S subunit body where it stabilizes the conformation of the head with respect to the body. This is Small ribosomal subunit protein uS5 from Chromohalobacter salexigens (strain ATCC BAA-138 / DSM 3043 / CIP 106854 / NCIMB 13768 / 1H11).